We begin with the raw amino-acid sequence, 374 residues long: tRNA-specific 2-thiouridylase MnmA (374 aa).

Residues 15-22 and Met41 each bind ATP; that span reads GMSGGVDS. The interaction with target base in tRNA stretch occupies residues 101-103; sequence NPD. Cys106 (nucleophile) is an active-site residue. Residues Cys106 and Cys203 are joined by a disulfide bond. Gly130 is an ATP binding site. Positions 153 to 155 are interaction with tRNA; that stretch reads KDQ. Residue Cys203 is the Cysteine persulfide intermediate of the active site. The interval 311–312 is interaction with tRNA; the sequence is RY.

Belongs to the MnmA/TRMU family.

The protein resides in the cytoplasm. It carries out the reaction S-sulfanyl-L-cysteinyl-[protein] + uridine(34) in tRNA + AH2 + ATP = 2-thiouridine(34) in tRNA + L-cysteinyl-[protein] + A + AMP + diphosphate + H(+). Functionally, catalyzes the 2-thiolation of uridine at the wobble position (U34) of tRNA, leading to the formation of s(2)U34. The polypeptide is tRNA-specific 2-thiouridylase MnmA (Lysinibacillus sphaericus (strain C3-41)).